Consider the following 538-residue polypeptide: Glutamyl-tRNA(Gln) amidotransferase subunit B, mitochondrial (538 aa).

Belongs to the GatB/GatE family. GatB subfamily. As to quaternary structure, subunit of the heterotrimeric GatCAB amidotransferase (AdT) complex, composed of A, B and C subunits.

Its subcellular location is the mitochondrion. The enzyme catalyses L-glutamyl-tRNA(Gln) + L-glutamine + ATP + H2O = L-glutaminyl-tRNA(Gln) + L-glutamate + ADP + phosphate + H(+). Allows the formation of correctly charged Gln-tRNA(Gln) through the transamidation of misacylated Glu-tRNA(Gln) in the mitochondria. The reaction takes place in the presence of glutamine and ATP through an activated gamma-phospho-Glu-tRNA(Gln). The chain is Glutamyl-tRNA(Gln) amidotransferase subunit B, mitochondrial from Dictyostelium discoideum (Social amoeba).